The primary structure comprises 130 residues: ATP synthase epsilon chain (130 aa).

Belongs to the ATPase epsilon chain family. In terms of assembly, F-type ATPases have 2 components, CF(1) - the catalytic core - and CF(0) - the membrane proton channel. CF(1) has five subunits: alpha(3), beta(3), gamma(1), delta(1), epsilon(1). CF(0) has three main subunits: a, b and c.

It is found in the cell inner membrane. Its function is as follows. Produces ATP from ADP in the presence of a proton gradient across the membrane. This chain is ATP synthase epsilon chain, found in Pelagibacter ubique (strain HTCC1062).